The primary structure comprises 376 residues: tRNA-specific 2-thiouridylase MnmA (376 aa).

ATP-binding positions include 14-21 (GMSGGVDS) and M40. An interaction with target base in tRNA region spans residues 100–102 (NPD). C105 acts as the Nucleophile in catalysis. A disulfide bond links C105 and C202. G129 provides a ligand contact to ATP. An interaction with tRNA region spans residues 152-154 (KDQ). C202 serves as the catalytic Cysteine persulfide intermediate. The segment at 315–316 (RY) is interaction with tRNA.

It belongs to the MnmA/TRMU family.

The protein resides in the cytoplasm. The enzyme catalyses S-sulfanyl-L-cysteinyl-[protein] + uridine(34) in tRNA + AH2 + ATP = 2-thiouridine(34) in tRNA + L-cysteinyl-[protein] + A + AMP + diphosphate + H(+). Functionally, catalyzes the 2-thiolation of uridine at the wobble position (U34) of tRNA, leading to the formation of s(2)U34. In Lactococcus lactis subsp. cremoris (strain SK11), this protein is tRNA-specific 2-thiouridylase MnmA.